Reading from the N-terminus, the 101-residue chain is B3 domain-containing protein At1g08985 (101 aa).

A DNA-binding region (TF-B3) is located at residues 7–101; sequence IVKTLSETDC…WQNTKFIFSM (95 aa).

The protein localises to the nucleus. In Arabidopsis thaliana (Mouse-ear cress), this protein is B3 domain-containing protein At1g08985.